A 463-amino-acid chain; its full sequence is Peptidase inhibitor 16 (463 aa).

An N-terminal signal peptide occupies residues 1–27 (MHGSCSFLMLLLPLLLLLVATTGPVGA). One can recognise an SCP domain in the interval 37–165 (VELHNLYRAQ…TNIELLVCNY (129 aa)). Asn114 carries an N-linked (GlcNAc...) asparagine glycan. Disordered stretches follow at residues 262–281 (TQAP…TEAP), 303–341 (EPVT…DPKM), and 383–408 (LQAT…SATA). Residues 318–327 (SADKVTDKTK) are compositionally biased toward basic and acidic residues. The interval 386–395 (TLDHTGHTSS) is O-glycosylated at one site. Polar residues predominate over residues 392–408 (HTSSKSLPNFPNTSATA). 2 N-linked (GlcNAc...) asparagine glycosylation sites follow: Asn403 and Asn409.

This sequence belongs to the CRISP family. As to quaternary structure, interacts with PSP94/MSMB. Post-translationally, N- and O-glycosylated. O-glycosylated with core 1 or possibly core 8 glycans. In terms of tissue distribution, expressed in prostate, testis, ovary and intestine. Concentrates in prostate cancer patient's sera.

It localises to the secreted. Functionally, may inhibit cardiomyocyte growth. This is Peptidase inhibitor 16 (PI16) from Homo sapiens (Human).